The chain runs to 351 residues: Uroporphyrinogen decarboxylase (351 aa).

Substrate is bound by residues 25–29 (RQAGR), aspartate 74, tyrosine 151, serine 206, and histidine 325.

It belongs to the uroporphyrinogen decarboxylase family. In terms of assembly, homodimer.

It localises to the cytoplasm. The enzyme catalyses uroporphyrinogen III + 4 H(+) = coproporphyrinogen III + 4 CO2. The protein operates within porphyrin-containing compound metabolism; protoporphyrin-IX biosynthesis; coproporphyrinogen-III from 5-aminolevulinate: step 4/4. Its function is as follows. Catalyzes the decarboxylation of four acetate groups of uroporphyrinogen-III to yield coproporphyrinogen-III. The chain is Uroporphyrinogen decarboxylase from Chlorobium limicola (strain DSM 245 / NBRC 103803 / 6330).